A 351-amino-acid polypeptide reads, in one-letter code: Mediator of RNA polymerase II transcription subunit 18 (351 aa).

The interval Gly-153–Ser-231 is disordered. Residues Asn-163–Asp-204 show a composition bias toward basic and acidic residues. A compositionally biased stretch (acidic residues) spans Asn-205 to Asn-216. The span at Pro-217–Ser-231 shows a compositional bias: polar residues.

Belongs to the Mediator complex subunit 18 family. As to quaternary structure, component of the Mediator complex.

The protein resides in the nucleus. Its function is as follows. Component of the Mediator complex, a coactivator involved in the regulated transcription of nearly all RNA polymerase II-dependent genes. Mediator functions as a bridge to convey information from gene-specific regulatory proteins to the basal RNA polymerase II transcription machinery. Mediator is recruited to promoters by direct interactions with regulatory proteins and serves as a scaffold for the assembly of a functional preinitiation complex with RNA polymerase II and the general transcription factors. The chain is Mediator of RNA polymerase II transcription subunit 18 (SRB5) from Candida albicans (strain SC5314 / ATCC MYA-2876) (Yeast).